Here is a 123-residue protein sequence, read N- to C-terminus: 13 kDa major membrane protein (123 aa).

It is found in the cell membrane. In Francisella tularensis subsp. holarctica (strain LVS), this protein is 13 kDa major membrane protein.